A 61-amino-acid chain; its full sequence is U-stichotoxin-Hcr1b (61 aa).

The first 19 residues, 1–19 (PILIFAFVMFAVMVNAKPS), serve as a signal peptide directing secretion. Residues 20–31 (IDDAEMKREPKP) constitute a propeptide that is removed on maturation. 2 disulfide bridges follow: Cys-38-Cys-49 and Cys-41-Cys-56.

It belongs to the Hau1a/HC18/HC19 family.

It is found in the secreted. It localises to the nematocyst. Toxin that is lethal to crab. Does not produce the typical symptoms associated with sodium channel toxins in crabs, suggesting that it likely does not act on sodium channels. In Radianthus crispa (Leathery sea anemone), this protein is U-stichotoxin-Hcr1b.